Consider the following 124-residue polypeptide: Glycine cleavage system H protein (124 aa).

The Lipoyl-binding domain occupies 22–104 (LIVTGISDHA…YGKGWIYKMK (83 aa)). Residue Lys-63 is modified to N6-lipoyllysine.

This sequence belongs to the GcvH family. In terms of assembly, the glycine cleavage system is composed of four proteins: P, T, L and H. (R)-lipoate is required as a cofactor.

Functionally, the glycine cleavage system catalyzes the degradation of glycine. The H protein shuttles the methylamine group of glycine from the P protein to the T protein. This Acinetobacter baylyi (strain ATCC 33305 / BD413 / ADP1) protein is Glycine cleavage system H protein.